We begin with the raw amino-acid sequence, 159 residues long: Fimbrial protein EcpB (159 aa).

The propeptide at 1 to 6 is leader sequence; the sequence is MYKQKG. F7 bears the N-methylphenylalanine mark. A helical transmembrane segment spans residues 7–29; sequence FTLIELMIVIAIIGILAAIALPL. C137 and C156 are disulfide-bonded.

The protein belongs to the N-Me-Phe pilin family.

The protein localises to the fimbrium. It localises to the membrane. This Eikenella corrodens protein is Fimbrial protein EcpB (ecpB).